We begin with the raw amino-acid sequence, 78 residues long: Mandibular organ-inhibiting hormone 2 (78 aa).

3 disulfide bridges follow: Cys7/Cys44, Cys24/Cys40, and Cys27/Cys53.

It belongs to the arthropod CHH/MIH/GIH/VIH hormone family. In terms of tissue distribution, produced by the medulla terminalis X-organ in the eyestalks and transported to the sinus gland where it is stored and released.

The protein resides in the secreted. Functionally, represses the synthesis of methyl farnesoate, the precursor of insect juvenile hormone III in the mandibular organ. In Cancer pagurus (Rock crab), this protein is Mandibular organ-inhibiting hormone 2.